Reading from the N-terminus, the 630-residue chain is MLVFGPNSSFVRHANKKQEDSSIMNEPNGLMDPVLSTTNVSATSSNDNSANNSISSPEYTFGQFSMDSPHRTDATNTPILTATTNTTANNSLMNLKDTASLATNWKWKNSNNAQFVNDGEKQSSNANGKKNGGDKIYSSVATPQALNDELKNLEQLEKVFSPMNPINDSHFNENIELSPHQHATSPKTNLLEAEPSIYSNLFLDARLPNNANSTTGLNDNDYNLDDTNNDNTNSMQSILEDFVSSEEALKFMPDAGRDARRYSEVVTSSFPSMTDSRNSISHSIEFWNLNHKNSSNSKPTQQIIPEGTATTERRGSTISPTTTINNSNPNFKLLDHDVSQALSGYSMDFSKDSGITKPKSISSSLNRISHSSSTTRQQRASLPLIHDIESFANDSVMANPLSDSASFLSEENEDDAFGALNYNSLDATTMSAFDNNVDPFNILKSSPAQDQQFIKPSMMLSDNASAAAKLATSGVDNITPTPAFQRRSYDISMNSSFKILPTSQAHHAAQHHQQQPTKQATVSPNTRRRKSSSVTLSPTISHNNNNGKVPVQPRKRKSITTIDPNNYDKNKPFKCKDCEKAFRRSEHLKRHIRSVHSTERPFACMFCEKKFSRSDNLSQHLKTHKKHGDF.

Residue Met-1 is modified to N-acetylmethionine. A compositionally biased stretch (low complexity) spans 37–56; that stretch reads TTNVSATSSNDNSANNSISS. Disordered stretches follow at residues 37-77 and 115-137; these read TTNV…ATNT and FVND…DKIY. Phosphoserine is present on Ser-178. The short motif at 237 to 245 is the 9aaTAD element; it reads SILEDFVSS. At Ser-263 the chain carries Phosphoserine. Over residues 292–303 the composition is skewed to polar residues; the sequence is KNSSNSKPTQQI. 2 disordered regions span residues 292 to 322 and 360 to 379; these read KNSS…SPTT and SISS…RQQR. 2 positions are modified to phosphoserine: Ser-316 and Ser-319. Low complexity predominate over residues 360–373; the sequence is SISSSLNRISHSSS. Thr-479 carries the phosphothreonine modification. The interval 502–566 is disordered; the sequence is TSQAHHAAQH…KSITTIDPNN (65 aa). The segment covering 504–515 has biased composition (low complexity); it reads QAHHAAQHHQQQ. 2 stretches are compositionally biased toward polar residues: residues 516-525 and 532-547; these read PTKQATVSPN and SSVT…NNNG. The residue at position 558 (Ser-558) is a Phosphoserine. 2 consecutive C2H2-type zinc fingers follow at residues 573-596 and 602-624; these read FKCK…RSVH and FACM…LKTH.

It is found in the cytoplasm. The protein resides in the nucleus. In terms of biological role, positive transcriptional factor that acts as a component of the stress responsive system. Recognizes and binds to the stress response element (STRE) which is involved in the response to various forms of stress (heat, oxidative, osmotic, etc.). Involved in the regulation of the CTT1, DDR2, HSP12 genes. This is Zinc finger protein MSN4 (MSN4) from Saccharomyces cerevisiae (strain ATCC 204508 / S288c) (Baker's yeast).